The chain runs to 117 residues: Probable non-functional immunoglobulin heavy variable 1-38-4 (117 aa).

An N-terminal signal peptide occupies residues 1 to 19; it reads MDWNWRILFLVVATTGAHS. The framework-1 stretch occupies residues 20 to 44; that stretch reads QVQLVQSWAEVRKSGASVKVSCSFS. The 98-residue stretch at 20 to 117 folds into the Ig-like domain; sequence QVQLVQSWAE…EDMAVYYYAR (98 aa). Positions 45-52 are complementarity-determining-1; that stretch reads GFTITSYG. Residues 53–69 are framework-2; the sequence is IHWVQQSPGQGLEWMGW. The segment at 70-77 is complementarity-determining-2; it reads INPGNGSP. A glycan (N-linked (GlcNAc...) asparagine) is linked at Asn74. Positions 78–115 are framework-3; the sequence is SYAKKFQGRFTMTRDMSTTTAYTDLSSLTSEDMAVYYY. Positions 116–117 are complementarity-determining-3; sequence AR.

In terms of assembly, most probably, the immunoglobulin is not assembled due to incorrect folding of heavy chain. Immunoglobulins are composed of two identical heavy chains and two identical light chains; disulfide-linked.

It localises to the secreted. It is found in the cell membrane. In terms of biological role, probable non-functional open reading frame (ORF) of V region of the variable domain of immunoglobulin heavy chains. Non-functional ORF generally cannot participate in the synthesis of a productive immunoglobulin chain due to altered V-(D)-J or switch recombination and/or splicing site (at mRNA level) and/or conserved amino acid change (protein level). Immunoglobulins, also known as antibodies, are membrane-bound or secreted glycoproteins produced by B lymphocytes. In the recognition phase of humoral immunity, the membrane-bound immunoglobulins serve as receptors which, upon binding of a specific antigen, trigger the clonal expansion and differentiation of B lymphocytes into immunoglobulins-secreting plasma cells. Secreted immunoglobulins mediate the effector phase of humoral immunity, which results in the elimination of bound antigens. The antigen binding site is formed by the variable domain of one heavy chain, together with that of its associated light chain. Thus, each immunoglobulin has two antigen binding sites with remarkable affinity for a particular antigen. The variable domains are assembled by a process called V-(D)-J rearrangement and can then be subjected to somatic hypermutations which, after exposure to antigen and selection, allow affinity maturation for a particular antigen. The chain is Probable non-functional immunoglobulin heavy variable 1-38-4 from Homo sapiens (Human).